The sequence spans 198 residues: V-type ATP synthase subunit E (198 aa).

It belongs to the V-ATPase E subunit family.

Its function is as follows. Produces ATP from ADP in the presence of a proton gradient across the membrane. The sequence is that of V-type ATP synthase subunit E from Acetivibrio thermocellus (strain ATCC 27405 / DSM 1237 / JCM 9322 / NBRC 103400 / NCIMB 10682 / NRRL B-4536 / VPI 7372) (Clostridium thermocellum).